A 256-amino-acid chain; its full sequence is Protein YIPF7 (256 aa).

The Cytoplasmic portion of the chain corresponds to 1 to 125 (MSNLAQFDSD…VDGSIMNETD (125 aa)). 2 stretches are compositionally biased toward polar residues: residues 18–31 (IDNQ…SNAY) and 38–48 (RKQQAGEQPQP). The interval 18 to 48 (IDNQEQSGNDSNAYGNLYGSRKQQAGEQPQP) is disordered. Residues 126–146 (LTGPILFCVALGATLLLAGKV) traverse the membrane as a helical segment. Residue Q147 is a topological domain, extracellular. The helical transmembrane segment at 148-168 (FGYVYGMSAIGCLVIHALLNL) threads the bilayer. Residues 169-172 (MSSS) lie on the Cytoplasmic side of the membrane. A helical membrane pass occupies residues 173–193 (GVSYGCVASVLGYCLLPMVIL). Residues 194 to 196 (SGC) lie on the Extracellular side of the membrane. A helical membrane pass occupies residues 197–217 (AMFFSLQGIFGIMSSLVIIGW). Residues 218 to 235 (CSLSASKIFIAALHMEGQ) lie on the Cytoplasmic side of the membrane. A helical membrane pass occupies residues 236–256 (QLLVAYPCAILYGLFALLTIF).

This sequence belongs to the YIP1 family.

The protein localises to the endoplasmic reticulum membrane. Its subcellular location is the golgi apparatus. It is found in the cis-Golgi network membrane. The protein resides in the trans-Golgi network membrane. This Homo sapiens (Human) protein is Protein YIPF7 (YIPF7).